A 183-amino-acid chain; its full sequence is NRR repressor homolog 1 (183 aa).

2 disordered regions span residues Met1–Gly40 and Asn66–Gln183. Residues Glu31–Gly40 show a composition bias toward acidic residues. Residues Gly70 to Ala79 are compositionally biased toward gly residues. Residues Phe101–Ala115 are compositionally biased toward acidic residues. A compositionally biased stretch (basic and acidic residues) spans Ala135–Ala145. Positions Ala150 to Glu161 are enriched in acidic residues. Residues Val163–Gln183 show a composition bias toward basic and acidic residues.

It belongs to the NPR1-interactor family. Interacts with NPR1/NH1. Interacts with NPR3/NH3.

It localises to the nucleus. In terms of biological role, binds to and represses NPR1/NH1-mediated transcriptional activation of LG2 in vitro. In Oryza sativa subsp. japonica (Rice), this protein is NRR repressor homolog 1.